The sequence spans 601 residues: Glutathione-regulated potassium-efflux system protein KefB (601 aa).

13 helical membrane passes run 4–24, 29–49, 55–75, 87–107, 115–135, 152–172, 177–197, 207–227, 230–250, 268–288, 291–311, 324–344, and 356–376; these read SDFL…VPLA, IGAV…GLGF, EILH…GLEL, IFGV…GLLM, AAVV…LQLM, VLLF…LLAG, HFDW…LIGG, FIAA…LVLG, LFMD…GVLL, GLLL…GVLY, LLWV…VLYL, MQFA…FSTA, and ALLL…MKLV. The RCK N-terminal domain maps to 400–519; that stretch reads KPQVIVVGFG…AGVTQFSRET (120 aa).

This sequence belongs to the monovalent cation:proton antiporter 2 (CPA2) transporter (TC 2.A.37) family. KefB subfamily. Interacts with the regulatory subunit KefG.

It localises to the cell inner membrane. In terms of biological role, pore-forming subunit of a potassium efflux system that confers protection against electrophiles. Catalyzes K(+)/H(+) antiport. This chain is Glutathione-regulated potassium-efflux system protein KefB, found in Escherichia coli O139:H28 (strain E24377A / ETEC).